A 453-amino-acid polypeptide reads, in one-letter code: MELSPQDLWTQVLERLQSRLPRPAFDTWIGTAKIEQLTPQYLVICAANPFILNHLQKNYLQIIADVVEEILGYSIDIQLTSTQGENIAIVGETQVSAYYPTLSGEHPKPIKLNPKYTFSRFVVGSNNRLAHAATLAVAESPGREFNPLFLCGGVGLGKTHLMQAIAHYRLQMYPDSKVFYVSTEQFTNDLITAIRQDSLQSFREHYRTADILLVDDIQFIEGKEYTQEEFFHTFNTLHEAGKQVVIASDRPPKQIPTLEDRLISRFSMGLIADIQVPDLETRMAILQKKAEYENMRLPREVIEYIATHYTSNIRELEGALIRAITYISISGLSMTVENLAPVLNPPVERGEVTPELILNIIAETYKVSVEDLKGNSRRREISLARQIGMYLMRQHTDLSLPRIGEEFGGKDHTTVMYSYDKINQLQKKDLDLSQTLSQLSDRIHLASRTQKTT.

A domain I, interacts with DnaA modulators region spans residues 1–73 (MELSPQDLWT…ADVVEEILGY (73 aa)). Residues 73 to 110 (YSIDIQLTSTQGENIAIVGETQVSAYYPTLSGEHPKPI) are domain II. Residues 111–327 (KLNPKYTFSR…GALIRAITYI (217 aa)) are domain III, AAA+ region. Positions 155, 157, 158, and 159 each coordinate ATP. The domain IV, binds dsDNA stretch occupies residues 328–453 (SISGLSMTVE…HLASRTQKTT (126 aa)).

The protein belongs to the DnaA family. In terms of assembly, oligomerizes as a right-handed, spiral filament on DNA at oriC.

The protein resides in the cytoplasm. In terms of biological role, plays an essential role in the initiation and regulation of chromosomal replication. ATP-DnaA binds to the origin of replication (oriC) to initiate formation of the DNA replication initiation complex once per cell cycle. Binds the DnaA box (a 9 base pair repeat at the origin) and separates the double-stranded (ds)DNA. Forms a right-handed helical filament on oriC DNA; dsDNA binds to the exterior of the filament while single-stranded (ss)DNA is stabiized in the filament's interior. The ATP-DnaA-oriC complex binds and stabilizes one strand of the AT-rich DNA unwinding element (DUE), permitting loading of DNA polymerase. After initiation quickly degrades to an ADP-DnaA complex that is not apt for DNA replication. Binds acidic phospholipids. The chain is Chromosomal replication initiator protein DnaA from Gloeothece citriformis (strain PCC 7424) (Cyanothece sp. (strain PCC 7424)).